A 408-amino-acid chain; its full sequence is Aminoacylase-1 (408 aa).

His80 lines the Zn(2+) pocket. Asp82 is a catalytic residue. Asp113 lines the Zn(2+) pocket. Glu147 (proton acceptor) is an active-site residue. Positions 148, 175, and 373 each coordinate Zn(2+).

Belongs to the peptidase M20A family. In terms of assembly, homodimer. Interacts with SPHK1. Requires Zn(2+) as cofactor.

The protein localises to the cytoplasm. The enzyme catalyses an N-acyl-L-amino acid + H2O = an L-alpha-amino acid + a carboxylate. It carries out the reaction N-acetyl-L-methionine + H2O = L-methionine + acetate. The catalysed reaction is N-acetyl-L-glutamine + H2O = L-glutamine + acetate. Catalyzes the hydrolysis of N-acetylated amino acids to acetate and free amino acids. This Pongo abelii (Sumatran orangutan) protein is Aminoacylase-1 (ACY1).